We begin with the raw amino-acid sequence, 210 residues long: Large ribosomal subunit protein uL4 (210 aa).

This sequence belongs to the universal ribosomal protein uL4 family. In terms of assembly, part of the 50S ribosomal subunit.

Functionally, one of the primary rRNA binding proteins, this protein initially binds near the 5'-end of the 23S rRNA. It is important during the early stages of 50S assembly. It makes multiple contacts with different domains of the 23S rRNA in the assembled 50S subunit and ribosome. In terms of biological role, forms part of the polypeptide exit tunnel. The chain is Large ribosomal subunit protein uL4 (rplD) from Thermus thermophilus.